A 208-amino-acid polypeptide reads, in one-letter code: Urease accessory protein UreE (208 aa).

Residues 145–165 (EGGAYSAGGHGHTHAPAATPV) form a disordered region.

The protein belongs to the UreE family.

It is found in the cytoplasm. Functionally, involved in urease metallocenter assembly. Binds nickel. Probably functions as a nickel donor during metallocenter assembly. This Polaromonas naphthalenivorans (strain CJ2) protein is Urease accessory protein UreE.